A 231-amino-acid polypeptide reads, in one-letter code: Probable septum site-determining protein MinC (231 aa).

The disordered stretch occupies residues 102–125 (KEKAPRPAPAPQAPAQNTTPVTKT).

This sequence belongs to the MinC family. In terms of assembly, interacts with MinD and FtsZ.

Cell division inhibitor that blocks the formation of polar Z ring septums. Rapidly oscillates between the poles of the cell to destabilize FtsZ filaments that have formed before they mature into polar Z rings. Prevents FtsZ polymerization. The polypeptide is Probable septum site-determining protein MinC (Escherichia coli O6:K15:H31 (strain 536 / UPEC)).